The chain runs to 66 residues: Small ribosomal subunit protein bS21 (66 aa).

Belongs to the bacterial ribosomal protein bS21 family.

The polypeptide is Small ribosomal subunit protein bS21 (Persephonella marina (strain DSM 14350 / EX-H1)).